Reading from the N-terminus, the 749-residue chain is MATIKQIQFKRTKVAGSRPTAAQLAEGELAINLKDRTIFTKDDLNQIIDLGFAKGGEVSGDITQIGNYTQTGNYNLTGDATISGKTTTSTLDVGSVSDLRQTNFRPVLSTTTGSNFIISNSGGLIKPITLTVEGTATSSNTILRHSVDTTVAASGFIDSINVSLNPTDGALVTALNGTVNIGSSLKTPKLSVSGAETALGDYSISIGDNDTGFKWNSDGVFSLVTDSNSIYTYSRDRTYSNRPTNFRYTSDFDATTPALAPPGTWLASVETAIDGNAYGDGMSYLGYKDTAGYSFYFRGGGTFNVASKGGFNVDTAAAFAKTVDVSDILTCSSIIKAKGPGQVDVTSAGNIALGGTIQWVPSYMSGSPNRARDTIATAAWGDADQRINVLETSDPHGWWYYIQRAGSGSSSPTGIEGRVNGSWQASDLISDNTLRVAGAFTCTRRNSAGWGDNAGWYAGATPVVANQGNVQEMDPGVGGFYPGFAQYNYNGTGWNQAFVLGLLGQGVQRWRRGVLALRGDGPVDAGQQIARWYFSQEDGSLESEGPLKAPSVQAGQITSFGVNVTNALGSASIAIGDNDTGLRWGGDGIVQIVANNAIVGGWNSTDIFTEAGKHITSNGNLNQWGGGAIYCRDLNVSSDRRIKKDIKAFENPVDILSTIGGYTYLIEKGFNEDGSQAYEESAGLIAQEVEAVLPRLVKISNDGTKDVKRLNYNGITALNTAAINVHTKEINELKKQLKELKDIVKFLTK.

The interval 633–636 (DLNV) is interaction with the receptor-recognizing protein gp38. One can recognise a Peptidase S74 domain in the interval 638–737 (SDRRIKKDIK…KEINELKKQL (100 aa)). The stretch at 720–749 (TAAINVHTKEINELKKQLKELKDIVKFLTK) forms a coiled coil.

The protein belongs to the S16-like long tail fiber protein Gp37 family. Homotrimer. Interacts with the receptor-recognizing protein Gp38. Proteolytic cleavage and release of the chaperone in the host cytosol stabilizes the folded protein.

The protein localises to the virion. Its function is as follows. Constitues the trimeric tip of the long tail fiber that mediates the attachment to the host OmpC receptor and lipopolysaccharides, together with the receptor-recognizing protein Gp38. In terms of biological role, the C-terminal chaperone protein mediates homotrimerization and proper folding of the catalytic trimer. In Salmonella phage S16 (Salmonella phage vB_SenM-S16), this protein is Long tail fiber protein Gp37.